The primary structure comprises 483 residues: MSNKLLSPHPHSVVLRSEFKMASSPAVLRASRLYQWSLKSSAQFLGSPQLRQVGQIIRVPARMAATLILEPAGRCCWDEPVRIAVRGLAPEQPVTLRASLRDEKGALFQAHARYRADTLGELDLERAPALGGSFAGLEPMGLLWALEPEKPLVRLVKRDVRTPLAVELEVLDGHDPDPGRLLCQTRHERYFLPPGVRREPVRVGRVRGTLFLPPEPGPFPGIVDMFGTGGGLLEYRASLLAGKGFAVMALAYYNYEDLPKTMETLHLEYFEEAMNYLLSHPEVKGPGVGLLGISKGGELCLSMASFLKGITAAVVINGSVANVGGTLHYKGETLPPVGVNRNRIKVTKDGYADIVDVLNSPLEGPDQKSFIPVERAESTFLFLVGQDDHNWKSEFYANEACKRLQAHGRRKPQIICYPETGHYIEPPYFPLCRASLHALVGSPIIWGGEPRAHAMAQVDAWKQLQTFFHKHLGGHEGTIPSKV.

At Lys104 the chain carries N6-acetyllysine. Residues Ser294, Asp388, and His422 each act as charge relay system in the active site. Lys470 bears the N6-succinyllysine mark. The Microbody targeting signal motif lies at 481-483 (SKV).

The protein belongs to the C/M/P thioester hydrolase family. As to quaternary structure, monomer. In terms of tissue distribution, strongest expression in heart, liver, muscle and kidney. Weak in placenta and pancreas.

The protein resides in the mitochondrion. The enzyme catalyses hexadecanoyl-CoA + H2O = hexadecanoate + CoA + H(+). It carries out the reaction tetradecanoyl-CoA + H2O = tetradecanoate + CoA + H(+). It catalyses the reaction octadecanoyl-CoA + H2O = octadecanoate + CoA + H(+). The catalysed reaction is eicosanoyl-CoA + H2O = eicosanoate + CoA + H(+). The enzyme catalyses decanoyl-CoA + H2O = decanoate + CoA + H(+). It carries out the reaction dodecanoyl-CoA + H2O = dodecanoate + CoA + H(+). It catalyses the reaction (9Z)-octadecenoyl-CoA + H2O = (9Z)-octadecenoate + CoA + H(+). The catalysed reaction is (9Z)-hexadecenoyl-CoA + H2O = (9Z)-hexadecenoate + CoA + H(+). The enzyme catalyses (9E)-octadecenoyl-CoA + H2O = (9E)-octadecenoate + CoA + H(+). It carries out the reaction (9Z,12Z)-octadecadienoyl-CoA + H2O = (9Z,12Z)-octadecadienoate + CoA + H(+). It functions in the pathway lipid metabolism; fatty acid metabolism. In terms of biological role, catalyzes the hydrolysis of acyl-CoAs into free fatty acids and coenzyme A (CoASH), regulating their respective intracellular levels. Displays higher activity toward long chain acyl CoAs (C14-C20). The enzyme is involved in enhancing the hepatic fatty acid oxidation in mitochondria. This chain is Acyl-coenzyme A thioesterase 2, mitochondrial (ACOT2), found in Homo sapiens (Human).